Reading from the N-terminus, the 293-residue chain is 5'-3' exoribonuclease Rnm (293 aa).

Residues His-17, His-19, Asp-24, His-49, Glu-76, His-87, His-202, Asp-259, and His-261 each coordinate Mn(2+).

This sequence belongs to the PHP family. TrpH/YciV subfamily. Mn(2+) serves as cofactor.

The enzyme catalyses a ribonucleoside 3',5'-bisphosphate + H2O = a ribonucleoside 5'-phosphate + phosphate. Its function is as follows. Exoribonuclease that catalyzes the last steps of 5S, 16S and 23S rRNA 5'-end maturation. Removes 3 nucleotides (nt) from the 5' end of 5S, 16S and 23S rRNA precursors to generate the mature 5' ends. 5S and 23S rRNA maturation occurs more efficiently and accurately on ribosomal particles as compared to free RNA. Efficiently catalyzes the hydrolysis of the 3'-phosphate from 3',5'-bis-phosphonucleotides as well as the successive hydrolysis of 5'-phosphomononucleotides from the 5'-end of short pieces of RNA and DNA, with no specificity toward the identity of the nucleotide base. Is more efficient at hydrolyzing RNA oligonucleotides than DNA oligonucleotides. This enzyme can also hydrolyze annealed DNA duplexes, albeit at a catalytic efficiency lower than that of the corresponding single-stranded oligonucleotides. This chain is 5'-3' exoribonuclease Rnm, found in Salmonella typhimurium (strain LT2 / SGSC1412 / ATCC 700720).